Consider the following 475-residue polypeptide: Transmembrane protein 44 (475 aa).

Over 1–29 (MGEAPSPAPALWDWDYLDRCFARHRVCIS) the chain is Extracellular. A helical membrane pass occupies residues 30–50 (FGLWICASSCWIAAHALLLYL). Residues 51-61 (RCAQKPRQDQS) are Cytoplasmic-facing. The helical transmembrane segment at 62 to 82 (ALCAACCLLTSLCDTVGALLA) threads the bilayer. The Extracellular segment spans residues 83-88 (RQLTIQ). A helical membrane pass occupies residues 89–109 (VFTGAYLAAIDLVNFMFILFP). At 110–135 (VCGSKFKSNSDREARERKRRRQLRAS) the chain is on the cytoplasmic side. The helical transmembrane segment at 136-156 (VFALALPLSLGPCWALWVAVP) threads the bilayer. The Extracellular portion of the chain corresponds to 157-179 (KASATIRGPQRRLLASLLQENTE). The helical transmembrane segment at 180 to 200 (ILGYLLGSVAAFGSWASRIPP) threads the bilayer. Residues 201-259 (LSRIAPPPTLGITTQHEIWRGQMSKPSQSPSRSPSGHWRAAAQRQVLGTEMCRGKTFPS) lie on the Cytoplasmic side of the membrane. A helical transmembrane segment spans residues 260 to 280 (IHLWTRLLSALAGLLYASAIV). Topologically, residues 281–294 (AHDQHPEYLLRATP) are extracellular. The chain crosses the membrane as a helical span at residues 295–315 (WFLTSLGRAALDLAIIFLSCV). The Cytoplasmic segment spans residues 316-475 (MKSKMRQALG…VRTAHLSDDD (160 aa)). Positions 390–475 (SATRLPGDGQ…VRTAHLSDDD (86 aa)) are disordered. The span at 424–436 (SSGSSSEVSSINS) shows a compositional bias: low complexity. The span at 464 to 475 (DSVRTAHLSDDD) shows a compositional bias: basic and acidic residues. S465 bears the Phosphoserine mark.

The protein localises to the membrane. The protein is Transmembrane protein 44 (TMEM44) of Homo sapiens (Human).